Here is a 330-residue protein sequence, read N- to C-terminus: PDZ and LIM domain protein 4 (330 aa).

In terms of domain architecture, PDZ spans 1-84 (MTHAVTLRGP…HLTLSVSRPE (84 aa)). 2 disordered regions span residues 104–154 (DPEA…NEVT) and 219–239 (EAGE…KPAA). Phosphoserine occurs at positions 111, 115, 118, 119, 124, and 134. A compositionally biased stretch (polar residues) spans 111–122 (SPATSRRSSISG). The region spanning 255 to 305 (CTRCGHGIVGTIVKARDKLYHPECFMCSDCGLNLKQRGYFFLDERLYCENH) is the LIM zinc-binding domain.

In terms of assembly, homodimer. Interacts (via C-terminus only or via combined C-terminus and LIM domain, but not LIM domain only) with PTPN13 (via the second or fourth PDZ domains). Found in a complex with PTPN13 and TRIP6. Interacts (via PDZ domain) with ACTN1 and ACTN2 (via C-terminal SDL residues). Interacts (via PDZ domain) with TRIP6 (via the second LIM domain or via the third LIM domain plus C-terminus). Interacts (via LIM domain) with GRIA1 (via C-terminus); this interaction as well as the interaction with alpha-actinin is required for their colocalization in early endosomes. Interacts with PDLIM1. Forms (via LIM domain) a heterodimer with PDLIM3. Interacts directly with SRC (via kinase domain and to a lesser extent the SH2 domain). Post-translationally, phosphorylated on tyrosine residue(s). Can be dephosphorylated by PTPN13. As to expression, detected in several tissues, most prominent in brain and heart of adults. Expressed in embryonic fibroblasts.

It localises to the cytoplasm. It is found in the cytoskeleton. The protein resides in the cell projection. The protein localises to the dendritic spine. Its subcellular location is the early endosome membrane. It localises to the recycling endosome membrane. It is found in the nucleus. The protein resides in the perinuclear region. The protein localises to the lamellipodium. Its subcellular location is the synapse. It localises to the synaptosome. Suppresses SRC activation by recognizing and binding to active SRC and facilitating PTPN13-mediated dephosphorylation of SRC 'Tyr-419' leading to its inactivation. Inactivated SRC dissociates from this protein allowing the initiation of a new SRC inactivation cycle. Involved in reorganization of the actin cytoskeleton. In nonmuscle cells, binds to ACTN1 (alpha-actinin-1), increases the affinity of ACTN1 to F-actin (filamentous actin), and promotes formation of actin stress fibers. Involved in regulation of the synaptic AMPA receptor transport in dendritic spines of hippocampal pyramidal neurons directing the receptors toward an insertion at the postsynaptic membrane. Links endosomal surface-internalized GRIA1-containing AMPA receptors to the alpha-actinin/actin cytoskeleton. Increases AMPA receptor-mediated excitatory postsynaptic currents in neurons. This chain is PDZ and LIM domain protein 4 (Pdlim4), found in Rattus norvegicus (Rat).